Here is a 540-residue protein sequence, read N- to C-terminus: GMP synthase [glutamine-hydrolyzing] (540 aa).

Positions 26–216 (LIIILDFGSQ…VYHICDCEPT (191 aa)) constitute a Glutamine amidotransferase type-1 domain. C103 acts as the Nucleophile in catalysis. Catalysis depends on residues H190 and E192. The region spanning 217–415 (WTTAAFVEEA…IGLPEEIVQR (199 aa)) is the GMPS ATP-PPase domain. 244 to 250 (SGGVDSS) contributes to the ATP binding site.

Homodimer.

It carries out the reaction XMP + L-glutamine + ATP + H2O = GMP + L-glutamate + AMP + diphosphate + 2 H(+). Its pathway is purine metabolism; GMP biosynthesis; GMP from XMP (L-Gln route): step 1/1. Its function is as follows. Catalyzes the synthesis of GMP from XMP. The polypeptide is GMP synthase [glutamine-hydrolyzing] (Nostoc punctiforme (strain ATCC 29133 / PCC 73102)).